Reading from the N-terminus, the 599-residue chain is UvrABC system protein C (599 aa).

The GIY-YIG domain occupies 15–93 (DNPGVYQYYD…IKTLQPRYNI (79 aa)). Residues 207 to 242 (KDSMKDFKKVMTNLAQNMHFEEAQKIKEKIEILENY) form the UVR domain.

It belongs to the UvrC family. As to quaternary structure, interacts with UvrB in an incision complex.

It localises to the cytoplasm. In terms of biological role, the UvrABC repair system catalyzes the recognition and processing of DNA lesions. UvrC both incises the 5' and 3' sides of the lesion. The N-terminal half is responsible for the 3' incision and the C-terminal half is responsible for the 5' incision. The polypeptide is UvrABC system protein C (Flavobacterium psychrophilum (strain ATCC 49511 / DSM 21280 / CIP 103535 / JIP02/86)).